The primary structure comprises 990 residues: Aminopeptidase Q (990 aa).

The Cytoplasmic portion of the chain corresponds to 2–13; the sequence is GPPSSSGFYVSR. Residues 14-34 traverse the membrane as a helical; Signal-anchor for type II membrane protein segment; the sequence is AVALLLAGLVAALLLALAVLA. Residues 35 to 990 are Lumenal-facing; sequence ALYGHCERVP…RIAAWLRRNT (956 aa). The interval 48-91 is disordered; it reads LPGLRDLEAESSPPLRQKPTPTPKPSSARELAVTTTPSNWRPPG. N-linked (GlcNAc...) asparagine glycans are attached at residues Asn-132 and Asn-168. Position 240 (Glu-240) interacts with substrate. N-linked (GlcNAc...) asparagine glycosylation is found at Asn-261, Asn-288, Asn-319, and Asn-346. Residue 379–383 coordinates substrate; that stretch reads HAMEN. Zn(2+) is bound at residue His-415. The active-site Proton acceptor is the Glu-416. His-419 and Glu-438 together coordinate Zn(2+). The Proton donor role is filled by Tyr-503. Asn-607 and Asn-653 each carry an N-linked (GlcNAc...) asparagine glycan.

Belongs to the peptidase M1 family. In terms of assembly, homodimer. The cofactor is Zn(2+). Post-translationally, N-glycosylated. Specifically expressed in placenta and not in other tissues. Mainly found at the cell surface region of the extravillous trophoblasts. Detected on extravillous trophoblasts in the outer layer of the chorion laeve in the fetal membrane Not detected on either fetal amnionic epithelial cells or maternal decidual cells. Also detected in the migrating extravillous trophoblasts in the maternal decidual tissues (at protein level).

It localises to the membrane. Its activity is regulated as follows. Inhibited by bestatin. Metalloprotease which may be important for placentation by regulating biological activity of key peptides at the embryo-maternal interface. On synthetic substrates it shows a marked preference for Leu-4-methylcoumaryl-7-amide (Leu-MCA) over Met-MCA, Arg-LCA and Lys-LCA. Cleaves the N-terminal amino acid of several peptides such as angiotensin-3, kisspeptin-10 and endokinin C. This chain is Aminopeptidase Q, found in Homo sapiens (Human).